Consider the following 263-residue polypeptide: Endonuclease 8 (263 aa).

Pro-2 (schiff-base intermediate with DNA) is an active-site residue. Catalysis depends on Glu-3, which acts as the Proton donor. Lys-53 serves as the catalytic Proton donor; for beta-elimination activity. DNA is bound by residues Gln-70, Arg-125, and Asn-169. The segment at Lys-229–Lys-263 adopts an FPG-type zinc-finger fold. Arg-253 (proton donor; for delta-elimination activity) is an active-site residue.

The protein belongs to the FPG family. Zn(2+) serves as cofactor.

It catalyses the reaction 2'-deoxyribonucleotide-(2'-deoxyribose 5'-phosphate)-2'-deoxyribonucleotide-DNA = a 3'-end 2'-deoxyribonucleotide-(2,3-dehydro-2,3-deoxyribose 5'-phosphate)-DNA + a 5'-end 5'-phospho-2'-deoxyribonucleoside-DNA + H(+). Functionally, involved in base excision repair of DNA damaged by oxidation or by mutagenic agents. Acts as a DNA glycosylase that recognizes and removes damaged bases. Has a preference for oxidized pyrimidines, such as thymine glycol, 5,6-dihydrouracil and 5,6-dihydrothymine. Has AP (apurinic/apyrimidinic) lyase activity and introduces nicks in the DNA strand. Cleaves the DNA backbone by beta-delta elimination to generate a single-strand break at the site of the removed base with both 3'- and 5'-phosphates. This Salmonella arizonae (strain ATCC BAA-731 / CDC346-86 / RSK2980) protein is Endonuclease 8.